We begin with the raw amino-acid sequence, 155 residues long: Protein FAM162A (155 aa).

The interval 77–103 (RFKKEEEIPETISFEMLDAAKNKIRVK) is required for proapoptotic activity. Residues 102–121 (VKVSYLMIALTVAGCVYMVI) form a helical membrane-spanning segment.

Belongs to the UPF0389 family. Interacts with HSP90AB1; HSP90AB1 is essential for FAM162A mitochondrial localization and pro-apoptotic activity. Interacts with VDAC2; the interaction is probably involved in inducing mitochondrial permeability transition.

The protein resides in the mitochondrion membrane. Proposed to be involved in regulation of apoptosis; the exact mechanism may differ between cell types/tissues. May be involved in hypoxia-induced cell death of transformed cells implicating cytochrome C release and caspase activation (such as CASP9) and inducing mitochondrial permeability transition. May be involved in hypoxia-induced cell death of neuronal cells probably by promoting release of AIFM1 from mitochondria to cytoplasm and its translocation to the nucleus; however, the involvement of caspases has been reported conflictingly. This is Protein FAM162A (Fam162a) from Rattus norvegicus (Rat).